A 310-amino-acid polypeptide reads, in one-letter code: Pantoate--beta-alanine ligase (310 aa).

Residue Met32 to His39 coordinates ATP. The active-site Proton donor is the His39. Residue Gln63 coordinates (R)-pantoate. A beta-alanine-binding site is contributed by Gln63. Residue Gly175–Asp178 coordinates ATP. Gln181 contributes to the (R)-pantoate binding site. Met212–Arg215 serves as a coordination point for ATP.

It belongs to the pantothenate synthetase family. As to quaternary structure, homodimer. As to expression, expressed in roots, cotyledons, leaves, stems, cauline leaves, stigma, sepals and petals.

It localises to the cytoplasm. It is found in the cytosol. It carries out the reaction (R)-pantoate + beta-alanine + ATP = (R)-pantothenate + AMP + diphosphate + H(+). It participates in cofactor biosynthesis; (R)-pantothenate biosynthesis; (R)-pantothenate from (R)-pantoate and beta-alanine: step 1/1. With respect to regulation, enzyme kinetics do not match Michaelis-Menten kinetics, suggesting allosteric behavior. Inhibited by high pantoate levels. Functionally, catalyzes the condensation of pantoate with beta-alanine to form pantothenate. Essential for panthotenate biosynthesis. The protein is Pantoate--beta-alanine ligase of Arabidopsis thaliana (Mouse-ear cress).